The chain runs to 529 residues: uncharacterized protein (529 aa).

The disordered stretch occupies residues 1–20 (MGADLKQPQDADSPPKGVSR). Positions 1–52 (MGADLKQPQDADSPPKGVSRRRFLTTGAAAVVGTGVGAGGTALLSSHPRGPA) form a signal peptide, tat-type signal.

In terms of processing, predicted to be exported by the Tat system. The position of the signal peptide cleavage has not been experimentally proven.

This is an uncharacterized protein from Mycobacterium tuberculosis (strain CDC 1551 / Oshkosh).